The chain runs to 449 residues: 3-phosphoshikimate 1-carboxyvinyltransferase (449 aa).

The segment at 1–23 (MSHSASPKPATARRSEALTGEIR) is disordered. 3-phosphoshikimate is bound by residues Lys-28, Ser-29, and Arg-33. Lys-28 lines the phosphoenolpyruvate pocket. Residues Gly-100 and Arg-128 each contribute to the phosphoenolpyruvate site. 3-phosphoshikimate is bound by residues Ser-173, Gln-175, Asp-326, and Lys-353. Gln-175 contacts phosphoenolpyruvate. The active-site Proton acceptor is the Asp-326. Phosphoenolpyruvate-binding residues include Arg-357 and Arg-402.

The protein belongs to the EPSP synthase family. In terms of assembly, monomer.

Its subcellular location is the cytoplasm. It catalyses the reaction 3-phosphoshikimate + phosphoenolpyruvate = 5-O-(1-carboxyvinyl)-3-phosphoshikimate + phosphate. Its pathway is metabolic intermediate biosynthesis; chorismate biosynthesis; chorismate from D-erythrose 4-phosphate and phosphoenolpyruvate: step 6/7. Its function is as follows. Catalyzes the transfer of the enolpyruvyl moiety of phosphoenolpyruvate (PEP) to the 5-hydroxyl of shikimate-3-phosphate (S3P) to produce enolpyruvyl shikimate-3-phosphate and inorganic phosphate. The protein is 3-phosphoshikimate 1-carboxyvinyltransferase of Pseudomonas sp. (strain PG2982).